The sequence spans 120 residues: uncharacterized protein (120 aa).

The signal sequence occupies residues 1–22 (MSTSGMLFIFATFCPCFLSCCA). Over 23-59 (FMSHWKLKDFSFRFLRMCGERSLVVCYPLKLLKQIRS) the chain is Extracellular. Residues 60–80 (LFSIAIGHLSLMLIEGSANLL) form a helical membrane-spanning segment. At 81-120 (SLEEISRTLLRILDFVGNKNMRTYLEVPLCRWHISQARPN) the chain is on the cytoplasmic side.

It localises to the membrane. This is an uncharacterized protein from Schizosaccharomyces pombe (strain 972 / ATCC 24843) (Fission yeast).